The primary structure comprises 129 residues: METVTSLVFIVNLLIIFTSVVNQARGDTCIDGLGYCNNCDERCKAKHGPSSESSCDRSVGVPLCKCYYECESPPSPPAPPKKCDGGAGICSQRCQGQCCDMNCAQKYIGGHGFCNTLGTFSFCQCEYPC.

Residues 1–26 form the signal peptide; that stretch reads METVTSLVFIVNLLIIFTSVVNQARG. 8 cysteine pairs are disulfide-bonded: C29–C70, C36–C55, C39–C64, C43–C66, C83–C129, C94–C114, C99–C123, and C103–C125.

This sequence belongs to the DEFL family.

The protein resides in the secreted. In terms of biological role, confers broad-spectrum resistance to pathogens. This Arabidopsis thaliana (Mouse-ear cress) protein is Defensin-like protein 182 (PDF3.2).